The sequence spans 482 residues: Zinc finger protein 223 (482 aa).

The KRAB domain occupies 8 to 78 (VTFKDVAVVF…DIATQREGNS (71 aa)). 5 consecutive C2H2-type zinc fingers follow at residues 176-198 (HSCD…QRVH), 204-226 (FKCD…QRVH), 232-254 (FKCE…CKLH), 260-282 (YNCE…QRIH), and 288-310 (FKCE…CVVH). A C2H2-type 6; degenerate zinc finger spans residues 316 to 338 (NSTGEYGKGFIRRLDLCKHQTIH). 3 C2H2-type zinc fingers span residues 344–366 (YNCK…QRVH), 372–394 (YKCD…HRAH), and 400–422 (YNCD…KRLH). The C2H2-type 10; degenerate zinc finger occupies 428 to 450 (FKCEDCGKKLVYRSYRKDQQKNH).

The protein belongs to the krueppel C2H2-type zinc-finger protein family.

Its subcellular location is the nucleus. Functionally, may be involved in transcriptional regulation. The protein is Zinc finger protein 223 (ZNF223) of Homo sapiens (Human).